The chain runs to 887 residues: Alanine--tRNA ligase (887 aa).

4 residues coordinate Zn(2+): H581, H585, C683, and H687.

The protein belongs to the class-II aminoacyl-tRNA synthetase family. Zn(2+) serves as cofactor.

It is found in the cytoplasm. The catalysed reaction is tRNA(Ala) + L-alanine + ATP = L-alanyl-tRNA(Ala) + AMP + diphosphate. Functionally, catalyzes the attachment of alanine to tRNA(Ala) in a two-step reaction: alanine is first activated by ATP to form Ala-AMP and then transferred to the acceptor end of tRNA(Ala). Also edits incorrectly charged Ser-tRNA(Ala) and Gly-tRNA(Ala) via its editing domain. The polypeptide is Alanine--tRNA ligase (Ehrlichia ruminantium (strain Welgevonden)).